The primary structure comprises 161 residues: Cap-associated protein CAF20 (161 aa).

Residues 52 to 72 (HFGRRRSSHHHGRPKIKHNKP) show a composition bias toward basic residues. The disordered stretch occupies residues 52 to 108 (HFGRRRSSHHHGRPKIKHNKPKVTTDSDGWCTFEAKKKGSGEDDEEETETTPTSTVP). Phosphoserine is present on residues S78 and S91. T99, T101, and T102 each carry phosphothreonine. Position 154 is a phosphoserine (S154).

Belongs to the CAF20 family. Interacts with TIF45. In terms of processing, phosphorylated by casein kinase II complex (CK2).

It localises to the cytoplasm. Acts as an inhibitor of cap-dependent translation. Competes with eIF4G1/TIF4631 and EAP1 for binding to eIF4E/TIF45 and interferes with the formation of the eIF4F complex, inhibiting translation and stabilizing mRNA. Binding affinity for eIF4E/TIF45 is 10-fold less than that of eIF4G1/TIF4631. Required for induction of pseudohyphal growth in response to nitrogen limitation, probably by regulating STE12 translation. The protein is Cap-associated protein CAF20 (CAF20) of Saccharomyces cerevisiae (strain ATCC 204508 / S288c) (Baker's yeast).